Here is a 132-residue protein sequence, read N- to C-terminus: Transmembrane protein C1orf162 homolog (132 aa).

Residues 36–56 traverse the membrane as a helical segment; sequence IILAFFAGVLLTLLIVALIFL. Positions 95 to 132 are disordered; the sequence is TFKPPEENSNDLTRNHSSGLEPTIYSQIKVTDSDLPLP. Residues 104-124 are compositionally biased toward polar residues; that stretch reads NDLTRNHSSGLEPTIYSQIKV. The residue at position 111 (S111) is a Phosphoserine.

Its subcellular location is the membrane. In Mus musculus (Mouse), this protein is Transmembrane protein C1orf162 homolog.